The primary structure comprises 240 residues: Membrane-spanning 4-domains subfamily A member 15 (240 aa).

The next 4 helical transmembrane spans lie at 73–93 (VLGTVQILIGLIHLGFGSVLL), 100–120 (VGIFFIEGGVPFWGGACFIIS), 144–164 (ILSVMAAFAGTAILLMDFGVT), and 173–193 (LAVLTIFTVLEFFTAVIAMHF).

It belongs to the MS4A family.

It localises to the membrane. Functionally, may be involved in signal transduction as a component of a multimeric receptor complex. The polypeptide is Membrane-spanning 4-domains subfamily A member 15 (MS4A15) (Homo sapiens (Human)).